Reading from the N-terminus, the 305-residue chain is Glycerol-3-phosphate dehydrogenase [NAD(P)+] (305 aa).

NADPH-binding residues include Phe10, Arg29, and Lys87. Sn-glycerol 3-phosphate-binding residues include Lys87, Gly115, and Ser117. Ala119 is a binding site for NADPH. Sn-glycerol 3-phosphate-binding residues include Lys170, Asp223, Ser233, Arg234, and Asn235. Lys170 acts as the Proton acceptor in catalysis. Arg234 is a binding site for NADPH. Glu255 is a binding site for NADPH.

It belongs to the NAD-dependent glycerol-3-phosphate dehydrogenase family.

It is found in the cytoplasm. The catalysed reaction is sn-glycerol 3-phosphate + NAD(+) = dihydroxyacetone phosphate + NADH + H(+). It carries out the reaction sn-glycerol 3-phosphate + NADP(+) = dihydroxyacetone phosphate + NADPH + H(+). The protein operates within membrane lipid metabolism; glycerophospholipid metabolism. In terms of biological role, catalyzes the reduction of the glycolytic intermediate dihydroxyacetone phosphate (DHAP) to sn-glycerol 3-phosphate (G3P), the key precursor for phospholipid synthesis. This Cereibacter sphaeroides (strain ATCC 17023 / DSM 158 / JCM 6121 / CCUG 31486 / LMG 2827 / NBRC 12203 / NCIMB 8253 / ATH 2.4.1.) (Rhodobacter sphaeroides) protein is Glycerol-3-phosphate dehydrogenase [NAD(P)+].